A 538-amino-acid chain; its full sequence is MTYSIGIDYGTASGRVFLVDTTNGEIISTYIKEYPHGTISESLNGTELPHNYFLQHAADYTSILEEGVQYVLKDSQVDPKSIIGIGIDFTSCTIVFLDDDFKPLHLHPDLEDQPHAYVKLWKHHGAQDEATYMKQVSDKVNPSWLNFYGHNVNSEWMIPKILEVKNKAPEVLERSAYIMEAGDYLVSLLTDKNIRSNCGIGFKGFYNETDGFNYSFFEAIDQELPEIVKTKCESPVVNIGESAGSLSPYYQNLWGLTEQVQISPYIIDAHSGVLGVGAIEQGEFTPVIGTSTCHLMLDPKQEPIPAITGSVKDAIIPGLYAYEAGQAAVGDLFNYSASLAPKSYVDQAEKQGLSILGYLEKLAADISIDKQHVTVLDWHNGNRSILSDSKLTGSIFGLTLQTPFEMIHKAYLESTAFGTKMIMQQFENNHIPVETVYAAGGIPIKSELLVDIYANVLNKEVVVIDSSNATALGAAMLGANVGGAYPTLKETVKHMKQPVYYRKQPEAKKVKQYALLFDRYKALHDLLGKEYPQLSYIN.

This sequence belongs to the ribulokinase family.

It catalyses the reaction D-ribulose + ATP = D-ribulose 5-phosphate + ADP + H(+). The catalysed reaction is L-ribulose + ATP = L-ribulose 5-phosphate + ADP + H(+). It participates in carbohydrate degradation; L-arabinose degradation via L-ribulose; D-xylulose 5-phosphate from L-arabinose (bacterial route): step 2/3. The sequence is that of Ribulokinase 1 from Staphylococcus saprophyticus subsp. saprophyticus (strain ATCC 15305 / DSM 20229 / NCIMB 8711 / NCTC 7292 / S-41).